The following is a 90-amino-acid chain: MARTVFCEHLKQEAEGLDFQLYPGELGKRIFEHISKQAWGDWLKKQTMLVNEKKLNMMNAEHRKLLEQEMVNFLFEGKDVHIEGYVPPEK.

It belongs to the Fe(2+)-trafficking protein family.

Could be a mediator in iron transactions between iron acquisition and iron-requiring processes, such as synthesis and/or repair of Fe-S clusters in biosynthetic enzymes. This Actinobacillus succinogenes (strain ATCC 55618 / DSM 22257 / CCUG 43843 / 130Z) protein is Probable Fe(2+)-trafficking protein.